Here is a 94-residue protein sequence, read N- to C-terminus: Large ribosomal subunit protein uL23 (94 aa).

It belongs to the universal ribosomal protein uL23 family. As to quaternary structure, part of the 50S ribosomal subunit. Contacts protein L29, and trigger factor when it is bound to the ribosome.

Functionally, one of the early assembly proteins it binds 23S rRNA. One of the proteins that surrounds the polypeptide exit tunnel on the outside of the ribosome. Forms the main docking site for trigger factor binding to the ribosome. The sequence is that of Large ribosomal subunit protein uL23 from Mycoplasma mycoides subsp. mycoides SC (strain CCUG 32753 / NCTC 10114 / PG1).